Consider the following 138-residue polypeptide: Ribosome-binding factor A (138 aa).

The disordered stretch occupies residues Val-116–Glu-138.

Belongs to the RbfA family. In terms of assembly, monomer. Binds 30S ribosomal subunits, but not 50S ribosomal subunits or 70S ribosomes.

The protein resides in the cytoplasm. Its function is as follows. One of several proteins that assist in the late maturation steps of the functional core of the 30S ribosomal subunit. Associates with free 30S ribosomal subunits (but not with 30S subunits that are part of 70S ribosomes or polysomes). Required for efficient processing of 16S rRNA. May interact with the 5'-terminal helix region of 16S rRNA. This chain is Ribosome-binding factor A, found in Pseudomonas syringae pv. tomato (strain ATCC BAA-871 / DC3000).